The chain runs to 584 residues: uncharacterized protein (584 aa).

Disordered stretches follow at residues leucine 123 to proline 156, lysine 209 to glycine 264, and serine 355 to threonine 479. Low complexity-rich tracts occupy residues serine 237 to serine 260 and serine 366 to threonine 376. 2 stretches are compositionally biased toward polar residues: residues proline 377–threonine 388 and aspartate 395–proline 419. Low complexity predominate over residues methionine 425–threonine 479.

This is an uncharacterized protein from Dictyostelium discoideum (Social amoeba).